Consider the following 333-residue polypeptide: MNIAVLGAGSWGTTLAVLLAKKGHDVRLWAHRPEFAATLDAERENRRYLKGVAFPDSLQITPHLQPLVSWSEMIVTAVPSQALRETILGFCTLDLSGKILVNVAKGIEIGTGKRMSEVLLEVLPGVCPSQVAALYGPSHAEEVSKGQPTTVVASSSSLATAEKVQEVFHTSMFRVYVNTDIVGVEIAGSVKNIIAIAAGISDGIGFGDNAKAAIITRGMAEISRLCSKLGGEAVTISGLAGIGDLVVTCLSRHSRNRYVGEEIGRGRSLDEVISQMNMIAEGVHSSRAVYELSRAVGVDMPITRAVYQMLFERKPVEQAILDLMTRDLKQERD.

S10, W11, H31, R32, and K105 together coordinate NADPH. 3 residues coordinate sn-glycerol 3-phosphate: K105, G136, and S138. A140 provides a ligand contact to NADPH. Sn-glycerol 3-phosphate contacts are provided by K191, D244, S254, R255, and N256. K191 (proton acceptor) is an active-site residue. R255 serves as a coordination point for NADPH. I279 and E281 together coordinate NADPH.

This sequence belongs to the NAD-dependent glycerol-3-phosphate dehydrogenase family.

Its subcellular location is the cytoplasm. It carries out the reaction sn-glycerol 3-phosphate + NAD(+) = dihydroxyacetone phosphate + NADH + H(+). The enzyme catalyses sn-glycerol 3-phosphate + NADP(+) = dihydroxyacetone phosphate + NADPH + H(+). It functions in the pathway membrane lipid metabolism; glycerophospholipid metabolism. Catalyzes the reduction of the glycolytic intermediate dihydroxyacetone phosphate (DHAP) to sn-glycerol 3-phosphate (G3P), the key precursor for phospholipid synthesis. The protein is Glycerol-3-phosphate dehydrogenase [NAD(P)+] of Pelodictyon phaeoclathratiforme (strain DSM 5477 / BU-1).